The primary structure comprises 157 residues: MPSVESFELDHTIVKAPYVRHCGVHNVGSDGIVNKFDIRFCQPNKQAMKPDVIHTLEHLLAFNLRKYIDRYPHFDIIDISPMGCQTGYYLVVSGTPTVREIIDLLELTLKDAVQITEIPAANETQCGQAKLHDLEGAQRLMNFWLSQDKDELEKVFG.

3 residues coordinate Fe cation: His54, His58, and Cys126.

It belongs to the LuxS family. In terms of assembly, homodimer. Fe cation is required as a cofactor.

It catalyses the reaction S-(5-deoxy-D-ribos-5-yl)-L-homocysteine = (S)-4,5-dihydroxypentane-2,3-dione + L-homocysteine. In terms of biological role, involved in the synthesis of autoinducer 2 (AI-2) which is secreted by bacteria and is used to communicate both the cell density and the metabolic potential of the environment. The regulation of gene expression in response to changes in cell density is called quorum sensing. Catalyzes the transformation of S-ribosylhomocysteine (RHC) to homocysteine (HC) and 4,5-dihydroxy-2,3-pentadione (DPD). The protein is S-ribosylhomocysteine lyase of Bacillus cereus (strain G9842).